The sequence spans 877 residues: ABC transporter A family member 1 (877 aa).

7 helical membrane passes run 46–66 (YFST…LFLI), 268–288 (VWGG…LLYK), 324–344 (ILIS…FFLG), 347–367 (FFVL…VAFF), 379–399 (IGIG…FSGM), 420–440 (IILF…IGNV), and 479–499 (LLAL…IIPG). Positions 552 to 788 (LIICGLSKSY…YGEGYSVNIV (237 aa)) constitute an ABC transporter domain. 591 to 598 (GSNGCGKS) contributes to the ATP binding site.

Belongs to the ABC transporter superfamily. ABCA family.

The protein resides in the membrane. The protein is ABC transporter A family member 1 (abcA1) of Dictyostelium discoideum (Social amoeba).